The following is a 181-amino-acid chain: Avenin-like a6 (181 aa).

Residues 1 to 19 (MKNLFILALLAFTATSAVA) form the signal peptide.

It belongs to the prolamin family. In terms of processing, contains 7 disulfide bonds.

Its function is as follows. Seed storage protein. Not integrated in the gluten polymer through disulfide bonds, unless incorporated by reduction and reoxidation during dough making. Increases dough strength and bread volume, but decreases dough stability when added into a base wheat flour. The sequence is that of Avenin-like a6 from Triticum aestivum (Wheat).